Consider the following 427-residue polypeptide: 3-phosphoshikimate 1-carboxyvinyltransferase (427 aa).

Lys-20, Ser-21, and Arg-25 together coordinate 3-phosphoshikimate. A phosphoenolpyruvate-binding site is contributed by Lys-20. Residues Gly-92 and Arg-120 each coordinate phosphoenolpyruvate. The 3-phosphoshikimate site is built by Ser-166, Gln-168, Asp-312, and Lys-339. Gln-168 is a binding site for phosphoenolpyruvate. Residue Asp-312 is the Proton acceptor of the active site. Positions 343 and 385 each coordinate phosphoenolpyruvate.

This sequence belongs to the EPSP synthase family. Monomer.

Its subcellular location is the cytoplasm. It carries out the reaction 3-phosphoshikimate + phosphoenolpyruvate = 5-O-(1-carboxyvinyl)-3-phosphoshikimate + phosphate. The protein operates within metabolic intermediate biosynthesis; chorismate biosynthesis; chorismate from D-erythrose 4-phosphate and phosphoenolpyruvate: step 6/7. Its function is as follows. Catalyzes the transfer of the enolpyruvyl moiety of phosphoenolpyruvate (PEP) to the 5-hydroxyl of shikimate-3-phosphate (S3P) to produce enolpyruvyl shikimate-3-phosphate and inorganic phosphate. The polypeptide is 3-phosphoshikimate 1-carboxyvinyltransferase (Streptococcus equi subsp. zooepidemicus (strain MGCS10565)).